The chain runs to 267 residues: Undecaprenyl-diphosphatase (267 aa).

The next 7 membrane-spanning stretches (helical) occupy residues 1–21 (MSLFHLILVALIQGITEFLPV), 40–60 (GQVIDVAVHVGTLGAVVLYFW), 85–105 (LAMGLIVATIPTVLAGAALHF), 111–131 (ALRSITVIGWTMLLFGLLLWW), 190–210 (MLMSIPTIIASGVLLGADVAV), 219–239 (DGAIAAAFAFVSALLALSLMM), and 245–265 (VSFTPYVIYRLALGLVLLGIA).

This sequence belongs to the UppP family.

It is found in the cell inner membrane. It carries out the reaction di-trans,octa-cis-undecaprenyl diphosphate + H2O = di-trans,octa-cis-undecaprenyl phosphate + phosphate + H(+). Functionally, catalyzes the dephosphorylation of undecaprenyl diphosphate (UPP). Confers resistance to bacitracin. The sequence is that of Undecaprenyl-diphosphatase from Ruegeria pomeroyi (strain ATCC 700808 / DSM 15171 / DSS-3) (Silicibacter pomeroyi).